A 316-amino-acid chain; its full sequence is UDP-N-acetyl-2-amino-2-deoxy-D-glucuronate oxidase (316 aa).

NAD(+) is bound by residues 11-13, 32-37, Glu55, 81-84, 101-102, Gln130, and 171-172; these read GYI, YDINDS, NYLH, EK, and WK.

Belongs to the Gfo/Idh/MocA family. Homotetramer.

It carries out the reaction UDP-2-acetamido-2-deoxy-alpha-D-glucuronate + NAD(+) = UDP-2-acetamido-2-deoxy-alpha-D-ribo-hex-3-uluronate + NADH + H(+). The enzyme catalyses 2-hydroxyglutarate + NAD(+) = 2-oxoglutarate + NADH + H(+). It functions in the pathway bacterial outer membrane biogenesis; LPS O-antigen biosynthesis. In terms of biological role, plays a role in the biosynthesis of B-band O antigen for serotype O5. Catalyzes the NAD-dependent oxidation of UDP-N-acetylglucosaminuronic acid (UDP-D-GlcNAcA) to UDP-2-acetamido-2-deoxy-3-oxo-D-glucuronic acid (UDP-3-oxo-D-GlcNAcA). Cannot use UDP-GlcNAc or UDP-GalNAc as the nucleotide sugar substrate, and can use only poorly UDP-D-glucuronic acid (UDP-GlcA). Undergoes an NAD(+) recycling mechanism using 2-oxoglutarate as an oxidant. This chain is UDP-N-acetyl-2-amino-2-deoxy-D-glucuronate oxidase, found in Pseudomonas aeruginosa (strain ATCC 15692 / DSM 22644 / CIP 104116 / JCM 14847 / LMG 12228 / 1C / PRS 101 / PAO1).